The sequence spans 168 residues: Iron-sulfur cluster assembly enzyme ISCU (168 aa).

The transit peptide at 1 to 35 (MAAATGAGRLRRAASALLLRSPRLPARELSAPARL) directs the protein to the mitochondrion. Ser15 carries the phosphoserine modification. Cys70 serves as the catalytic Cysteine persulfide intermediate. Cys70 carries the post-translational modification Cysteine persulfide. Residues Asp72, Cys96, and Cys139 each contribute to the Zn(2+) site. Catalysis depends on Cys139, which acts as the Cysteine persulfide intermediate. Cys139 carries the post-translational modification Cysteine persulfide.

Belongs to the NifU family. Homodimer; Tyr-36-mediated dimerization of two iron- and sulfide-containing ISCU subunit bind to the cysteine desulfurase complex. Component of the mitochondrial core iron-sulfur cluster (ISC) complex composed of NFS1, LYRM4, NDUFAB1, ISCU, FXN, and FDX2; this complex is a heterohexamer containing two copies of each monomer. Interacts (D-state) with NFS1 (homodimer form); each monomer interacts with the C-terminal regions of each NFS1 monomer. Interacts (monomer form) with FXN (via ferrous form); the interaction is possible when both are bound to the dimeric form of the cysteine desulfurase complex (NFS1:LYRM4) and enhances FXN interaction to the dimeric form of the cysteine desulfurase complex (NFS1:LYRM4). Interacts with GLRX5. Interacts (D-state) with HSPA9. Interacts (S-state) with HSCB; this interaction stimulates the ATPase activity of HSPA9. Component of a complex composed of FXN, NFS1, LYRM4 and ISCU. Post-translationally, cysteine persulfide is reduced by thiol-containing molecules such as glutathione and L-cysteine. Phosphorylation at Ser-15 is required for ISCU protein stabilization in the cytosol, whereas dephosphorylation of Ser-15, due to the inhibition of mTORC1 (mammalian target of rapamycin complex 1) complex, leads to degradation of the precursor form and ultimately to a decrease in the mitochondrial mature form.

Its subcellular location is the mitochondrion. In terms of biological role, mitochondrial scaffold protein, of the core iron-sulfur cluster (ISC) assembly complex, that provides the structural architecture on which the [2Fe-2S] clusters are assembled. The core iron-sulfur cluster (ISC) assembly complex is involved in the de novo synthesis of a [2Fe-2S] cluster, the first step of the mitochondrial iron-sulfur protein biogenesis. This process is initiated by the cysteine desulfurase complex (NFS1:LYRM4:NDUFAB1) that produces persulfide which is delivered on the scaffold protein ISCU in a FXN-dependent manner. Then this complex is stabilized by FDX2 which provides reducing equivalents to accomplish the [2Fe-2S] cluster assembly. Finally, the [2Fe-2S] cluster is transferred from ISCU to chaperone proteins, including HSCB, HSPA9 and GLRX5. Exists as two slow interchanging conformational states, a structured (S) and disordered (D) form. May modulate NFS1 desulfurase activity in a zinc-dependent manner. Modulates the interaction between FXN and the cysteine desulfurase complex. In Mus musculus (Mouse), this protein is Iron-sulfur cluster assembly enzyme ISCU.